The primary structure comprises 362 residues: Heme A synthase (362 aa).

Transmembrane regions (helical) follow at residues 15-35, 104-124, 129-149, 161-181, and 200-220; these read VRIWLTLVAMLIAVMVLVGGA, VIGIAYLLPLLWFLWRGAIAP, ALWAIFALGALQGAVGWWMVA, VRLAIHLTLALVIYAAIVWTL, and AIALLALTLVQLFLGALVAGL. H264 contributes to the heme binding site. A run of 3 helical transmembrane segments spans residues 266 to 285, 293 to 313, and 316 to 336; these read MMAYALWALAAWHAIDALRA, GALWLFAALSLQAVLGILTLL, and VPIGLALAHQAVGIVVLTLAV. H324 serves as a coordination point for heme.

It belongs to the COX15/CtaA family. Type 2 subfamily. Interacts with CtaB. The cofactor is heme b.

It localises to the cell membrane. It catalyses the reaction Fe(II)-heme o + 2 A + H2O = Fe(II)-heme a + 2 AH2. It participates in porphyrin-containing compound metabolism; heme A biosynthesis; heme A from heme O: step 1/1. Catalyzes the conversion of heme O to heme A by two successive hydroxylations of the methyl group at C8. The first hydroxylation forms heme I, the second hydroxylation results in an unstable dihydroxymethyl group, which spontaneously dehydrates, resulting in the formyl group of heme A. The chain is Heme A synthase from Rhodopseudomonas palustris (strain BisB5).